Consider the following 809-residue polypeptide: MSSVEELTQLFSQVGFEDKKVKEIVKNKKVSDSLYKLIKETPSDYQWNKSTRALVHNLASFVKGTDLPKSELIVNGIINGDLKTSLQVDAAFKYVKANGEASTKMGMNENSGVGIEITEDQVRNYVMQYIQENKERILTERYKLVPGIFADVKNLKELKWADPRSFKPIIDQEVLKLLGPKDERDLIKKKTKNNEKKKTNSAKKSSDNSASSGPKRTMFNEGFLGDLHKVGENPQAYPELMKEHLEVTGGKVRTRFPPEPNGYLHIGHSKAIMVNFGYAKYHNGTCYLRFDDTNPEKEAPEYFESIKRMVSWLGFKPWKITYSSDYFDELYRLAEVLIKNGKAYVCHCTAEEIKRGRGIKEDGTPGGERYACKHRDQSIEQNLQEFRDMRDGKYKPGEAILRMKQDLNSPSPQMWDLIAYRVLNAPHPRTGTKWRIYPTYDFTHCLVDSMENITHSLCTTEFYLSRESYEWLCDQVHVFRPAQREYGRLNITGTVLSKRKIAQLVDEKFVRGWDDPRLFTLEAIRRRGVPPGAILSFINTLGVTTSTTNIQVVRFESAVRKYLEDTTPRLMFVLDPVEVVVDNLSDDYEELATIPYRPGTPEFGERTVPFTNKFYIERSDFSENVDDKEFFRLTPNQPVGLIKVSHTVSFKSLEKDEAGKIIRIHVNYDNKVEEGSKPKKPKTYIQWVPISSKYNSPLRVTETRVYNQLFKSENPSSHPEGFLKDINPESEVVYKESVMEHNFGDVVKNSPWVVDSVKNSEFYVEEDKDSKEVCRFQAMRVGYFTLDKESTTSKVILNRIVSLKDATSK.

The span at 185–198 shows a compositional bias: basic and acidic residues; it reads DLIKKKTKNNEKKK. Positions 185-216 are disordered; sequence DLIKKKTKNNEKKKTNSAKKSSDNSASSGPKR. Residues 258-268 carry the 'HIGH' region motif; the sequence is PEPNGYLHIGH. ATP-binding positions include 259–261 and 265–271; these read EPN and HIGHSKA. D291 provides a ligand contact to L-glutamine. At S378 the chain carries Phosphoserine. Y440 lines the L-glutamine pocket. Residues T459, 488–489, and 496–498 each bind ATP; these read RL and LSK. Positions 495 to 499 match the 'KMSKS' region motif; that stretch reads VLSKR.

Belongs to the class-I aminoacyl-tRNA synthetase family.

It catalyses the reaction tRNA(Gln) + L-glutamine + ATP = L-glutaminyl-tRNA(Gln) + AMP + diphosphate. The chain is Glutamine--tRNA ligase (GLN4) from Saccharomyces cerevisiae (strain ATCC 204508 / S288c) (Baker's yeast).